Here is a 542-residue protein sequence, read N- to C-terminus: Excitatory amino acid transporter 1 (542 aa).

Over 1 to 47 (MTKSNGEEARLGGRMERFQQGVRKRTLLAKKKVQNITKEDVKSYLFR) the chain is Cytoplasmic. A helical transmembrane segment spans residues 48-68 (NAFVLLTVTAVIVGTILGFTL). Residues 69–86 (RPYRMSYREVKYFSFPGE) lie on the Extracellular side of the membrane. The helical transmembrane segment at 87 to 108 (LLMRMLQMLVLPLIISSLVTGM) threads the bilayer. The Cytoplasmic segment spans residues 109–122 (AALDSKASGKMGMR). A helical membrane pass occupies residues 123–145 (AVVYYMTTTIIAVVIGIIIVIII). Residues 146 to 236 (HPGKGTKENM…ITEELVPVPG (91 aa)) lie on the Extracellular side of the membrane. A helical transmembrane segment spans residues 237–260 (SVNGVNALGLVVFSMCFGFVIGNM). Over 261-269 (KEQGQALRE) the chain is Cytoplasmic. A helical transmembrane segment spans residues 270–297 (FFDSLNEAIMRLVAVIMWYAPLGILFLI). Topologically, residues 298-318 (AGKIVEMEDMGVIGGQLAMYT) are extracellular. Residues 319–340 (VTVIVGLLIHAVIVLPLLYFLV) form a helical membrane-spanning segment. Topologically, residues 341–345 (TRKNP) are cytoplasmic. An intramembrane region (discontinuously helical) is located at residues 346-376 (WVFIGGLLQALITALGTSSSSATLPITFKCL). Residue 363–365 (SSS) participates in L-aspartate binding. Residues 377–385 (EENNGVDKR) lie on the Cytoplasmic side of the membrane. Residues 386 to 412 (VTRFVLPVGATINMDGTALYEALAAIF) traverse the membrane as a helical segment. 3 residues coordinate Na(+): G394, T396, and N398. An L-aspartate-binding site is contributed by T402. At 413–425 (IAQVNNFELNFGQ) the chain is on the extracellular side. Positions 426 to 459 (IITISITATAASIGAAGIPQAGLVTMVIVLTSVG) form an intramembrane region, discontinuously helical. Position 443–447 (443–447 (IPQAG)) interacts with L-aspartate. The Extracellular segment spans residues 460–472 (LPTDDITLIIAVD). The chain crosses the membrane as a helical span at residues 473-494 (WFLDRLRTTTNVLGDSLGAGIV). Residues D476 and N483 each coordinate L-aspartate. Residues N483 and D487 each coordinate Na(+). Residues 495–542 (EHLSRHELKNRDVEMGNSVIEENEMKKPYQLISQESEIEKSMDSETKM) lie on the Cytoplasmic side of the membrane. Residue S512 is modified to Phosphoserine.

Belongs to the dicarboxylate/amino acid:cation symporter (DAACS) (TC 2.A.23) family. SLC1A3 subfamily. In terms of assembly, homotrimer. Post-translationally, glycosylated.

The protein localises to the cell membrane. It catalyses the reaction K(+)(in) + L-glutamate(out) + 3 Na(+)(out) + H(+)(out) = K(+)(out) + L-glutamate(in) + 3 Na(+)(in) + H(+)(in). It carries out the reaction K(+)(in) + L-aspartate(out) + 3 Na(+)(out) + H(+)(out) = K(+)(out) + L-aspartate(in) + 3 Na(+)(in) + H(+)(in). The enzyme catalyses D-aspartate(out) + K(+)(in) + 3 Na(+)(out) + H(+)(out) = D-aspartate(in) + K(+)(out) + 3 Na(+)(in) + H(+)(in). Its function is as follows. Sodium-dependent, high-affinity amino acid transporter that mediates the uptake of L-glutamate and also L-aspartate and D-aspartate. Functions as a symporter that transports one amino acid molecule together with two or three Na(+) ions and one proton, in parallel with the counter-transport of one K(+) ion. Plays a redundant role in the rapid removal of released glutamate from the synaptic cleft, which is essential for terminating the postsynaptic action of glutamate. This Bos taurus (Bovine) protein is Excitatory amino acid transporter 1 (SLC1A3).